The following is a 298-amino-acid chain: 4-hydroxy-tetrahydrodipicolinate synthase (298 aa).

Thr48 contributes to the pyruvate binding site. Tyr137 serves as the catalytic Proton donor/acceptor. The active-site Schiff-base intermediate with substrate is Lys166. Ile207 serves as a coordination point for pyruvate.

The protein belongs to the DapA family. In terms of assembly, homotetramer; dimer of dimers.

The protein resides in the cytoplasm. The enzyme catalyses L-aspartate 4-semialdehyde + pyruvate = (2S,4S)-4-hydroxy-2,3,4,5-tetrahydrodipicolinate + H2O + H(+). It participates in amino-acid biosynthesis; L-lysine biosynthesis via DAP pathway; (S)-tetrahydrodipicolinate from L-aspartate: step 3/4. Functionally, catalyzes the condensation of (S)-aspartate-beta-semialdehyde [(S)-ASA] and pyruvate to 4-hydroxy-tetrahydrodipicolinate (HTPA). In Campylobacter jejuni subsp. jejuni serotype O:23/36 (strain 81-176), this protein is 4-hydroxy-tetrahydrodipicolinate synthase.